The chain runs to 437 residues: Ribosomal protein uS12 methylthiotransferase RimO (437 aa).

The MTTase N-terminal domain occupies Pro4–Pro114. Cys13, Cys49, Cys78, Cys145, Cys149, and Cys152 together coordinate [4Fe-4S] cluster. The 239-residue stretch at Leu131 to Asn369 folds into the Radical SAM core domain. One can recognise a TRAM domain in the interval Lys372–Val437.

The protein belongs to the methylthiotransferase family. RimO subfamily. It depends on [4Fe-4S] cluster as a cofactor.

It localises to the cytoplasm. It carries out the reaction L-aspartate(89)-[ribosomal protein uS12]-hydrogen + (sulfur carrier)-SH + AH2 + 2 S-adenosyl-L-methionine = 3-methylsulfanyl-L-aspartate(89)-[ribosomal protein uS12]-hydrogen + (sulfur carrier)-H + 5'-deoxyadenosine + L-methionine + A + S-adenosyl-L-homocysteine + 2 H(+). Its function is as follows. Catalyzes the methylthiolation of an aspartic acid residue of ribosomal protein uS12. The polypeptide is Ribosomal protein uS12 methylthiotransferase RimO (Brucella anthropi (strain ATCC 49188 / DSM 6882 / CCUG 24695 / JCM 21032 / LMG 3331 / NBRC 15819 / NCTC 12168 / Alc 37) (Ochrobactrum anthropi)).